The chain runs to 3838 residues: Replicase polyprotein 1ab (3838 aa).

The segment at 8 to 28 adopts a C4-type; atypical zinc-finger fold; it reads CMCTPAARVFWNAGQVFCTRC. The 112-residue stretch at 69 to 180 folds into the Peptidase C31 domain; sequence ECTPSGCCWL…QPFCPFEEAH (112 aa). Residues 69–182 form a PCP1-alpha region; sequence ECTPSGCCWL…FCPFEEAHSD (114 aa). Active-site for Nsp1-alpha papain-like cysteine proteinase activity residues include Cys-76 and His-146. Residues 203–204 form an important for host EIF2AK2 inhibition region; the sequence is MM. The PCP1-beta stretch occupies residues 269–384; sequence PNVFDGKCWL…IFRFGAHKWY (116 aa). Residues 269-385 form the Peptidase C32 domain; that stretch reads PNVFDGKCWL…FRFGAHKWYG (117 aa). Active-site for Nsp1-beta papain-like cysteine proteinase activity residues include Cys-276 and His-345. Residues 418–505 form an OTU-like region; sequence ITTYSPPTDG…GVHWEVEVRS (88 aa). A Peptidase C33 domain is found at 420-527; that stretch reads TYSPPTDGSC…VGVCSEGCVA (108 aa). Active-site for Nsp2 cysteine proteinase activity residues include Cys-429 and His-498. Disordered stretches follow at residues 728–758 and 1027–1064; these read AIGSAQSSSDSKRENMHNSREDEPLDLSHPA and SVTPPPKSAGLVLDQTVPPPTDIQQEDATPSDGLSHAS. Residues 737–749 are compositionally biased toward basic and acidic residues; it reads DSKRENMHNSRED. A run of 5 helical transmembrane segments spans residues 1094–1114, 1117–1137, 1162–1182, 1211–1231, and 1235–1255; these read LMTWVFEVYSHLPAFILTLFS, GSMAPGDWLFAGVVLLALLLC, GVFGSWMAFAVFLFSTPSNPV, GLVVGPSGLLCVILGKLLGGS, and WHVILRLCMLTDLALSLVYVV. The HD1 stretch occupies residues 1132 to 1255; sequence LALLLCRSYP…DLALSLVYVV (124 aa). The segment at 1310–1334 is WCCH; it reads TGWRGCWRGESPIHQPHQKPIAYAN. The next 4 membrane-spanning stretches (helical) occupy residues 1450-1470, 1526-1546, 1556-1576, and 1592-1612; these read TLAVAQVSVWTLVHFILGLWF, EVGIFILVLVSLTALAHRLAL, AFCAYAWPMSSWLICFFPILL, and FLVFCMPAAGILSLGITGLLW. Positions 1451–1612 are HD2; sequence LAVAQVSVWT…LSLGITGLLW (162 aa). Residues 1677–1879 enclose the Peptidase S32 domain; it reads GAFRTHKPCL…SLLASVPVME (203 aa). Active-site charge relay system; for 3C-like serine proteinase activity residues include His-1715, Asp-1740, and Ser-1793. 5 helical membrane passes run 1875-1895, 1916-1936, 1960-1980, 2003-2023, and 2029-2048; these read VPVMEGGLSTVQLLCVFFLLW, ILPAVLVRAVFSFALFILAWA, LAFYALGGVVGLAAEIGAFAG, SYVPIIIIGGLHALGVILWLF, and HNMLVGDGSFSSAFFLRYFA. An HD3 region spans residues 1902–2023; it reads WTPIVAVGFF…HALGVILWLF (122 aa). A NiRAN domain is found at 2364 to 2527; sequence IISQLQGLTT…LPYKLYPVRG (164 aa). One can recognise a RdRp catalytic domain in the interval 2765–2899; sequence AGRCLEADLA…LYAERPTFPN (135 aa). Residues 3021 to 3084 form the AV ZBD domain; the sequence is GKKFRHCGIC…SPVGAGRSPL (64 aa). Residues Cys-3027, Cys-3030, Cys-3040, Cys-3045, His-3048, His-3050, His-3052, His-3054, Cys-3061, His-3063, Cys-3070, and Cys-3073 each coordinate Zn(2+). The (+)RNA virus helicase ATP-binding domain maps to 3134–3293; it reads DLPDGDYQVV…VFDQMPQKQL (160 aa). 3168 to 3175 serves as a coordination point for ATP; sequence VGPPGSGK. The (+)RNA virus helicase C-terminal domain occupies 3294–3423; it reads TTIYRFGPNI…FSRGDDLVVL (130 aa). The 98-residue stretch at 3462–3559 folds into the AV-Nsp11N/CoV-Nsp15M domain; it reads EGSCMPLPQV…LTLYIRGEPQ (98 aa). Positions 3561–3683 constitute a NendoU domain; the sequence is LPETLVSTGR…MVWKGATAYF (123 aa). Active-site residues include His-3592, His-3607, and Lys-3636.

This sequence belongs to the arteriviridae polyprotein family. As to quaternary structure, nsp1-alpha papain-like: Interacts with host RNF31. Interacts with host EIF2AK2; this interaction occurs in host stress granules and leads to EIF2AK2 inhibition. Interacts with host G3BP1; this interaction probably plays a role in Nsp1-beta-mediated inhibition of host EIF2AK2. In terms of assembly, interacts with host DDX18; this interaction redistributes host DDX18 to the cytoplasm. As to quaternary structure, interacts with host IFITM1. Interacts with host DDX5. In terms of assembly, interacts with host OTULIN. As to quaternary structure, interacts with host LGALS3. In terms of processing, specific enzymatic cleavages in vivo by its own proteases yield mature proteins. Nsp1 is autocleaved into two subunits, Nsp1-alpha and Nsp1-beta. There are two alternative pathways for processing. Either nsp4-5 is cleaved, which represents the major pathway or the nsp5-6 and nsp6-7 are processed, which represents the minor pathway. The major pathway occurs when nsp2 acts as a cofactor for nsp4.

Its subcellular location is the host nucleus. The protein resides in the host cytoplasm. It is found in the host membrane. It localises to the host endoplasmic reticulum. The protein localises to the host perinuclear region. It carries out the reaction RNA(n) + a ribonucleoside 5'-triphosphate = RNA(n+1) + diphosphate. The catalysed reaction is ATP + H2O = ADP + phosphate + H(+). It catalyses the reaction Thiol-dependent hydrolysis of ester, thioester, amide, peptide and isopeptide bonds formed by the C-terminal Gly of ubiquitin (a 76-residue protein attached to proteins as an intracellular targeting signal).. The enzyme catalyses uridylyl-uridylyl-ribonucleotide-RNA = a 3'-end uridylyl-2',3'-cyclophospho-uridine-RNA + a 5'-end dephospho-ribonucleoside-RNA. In terms of biological role, contains the activities necessary for the transcription of negative stranded RNA, leader RNA, subgenomic mRNAs and progeny virion RNA as well as proteinases responsible for the cleavage of the polyprotein into functional products. Inhibits host IFN-beta production. Plays a role in the degradation of the host transcriptional activator CREBBP protein. The degradation of host CREBBP which is a key component of the IFN enhanceosome is likely responsible for the inhibition of interferon mediated by Nsp1-alpha. Also participates in the inhibition of host NF-kappa-B activation by counteracting LUBAC-dependent induction of NF-kappa-B. Reduces host NEMO ubiquitination by blocking the interaction between the two LUBAC complex components RNF31 and SHARPIN. Functionally, plays a role in blocking host mRNA nuclear export to the cytoplasm and subversion of host protein synthesis. Additionally, inhibits the interferon-activated JAK/STAT signal transduction by mediating the ubiquitination and subsequent proteasomal degradation of host KPNA1. Repurposes the host antiviral stress granules into a proviral platform to counteract the EIF2AK2/PKR restriction, thereby regulating the host inflammatory response. Its function is as follows. Multifunctional protein that acts as a viral protease and as a viral antagonist of host immune response. Cleaves the nsp2/nsp3 site in the viral polyprotein. Displays deubiquitinating activity that cleaves both ubiquitinated and ISGylated products and therefore inhibits ubiquitin and ISG15-dependent host innate immunity. Also deubiquinates host NFKBIA, thereby interfering with NFKBIA degradation and impairing subsequent NF-kappa-B activation. In terms of biological role, plays a role in the inhibition of the immune response by interacting with host IFITM1. This interaction leads to the proteasomal degradation of the IFN-induced antiviral protein IFITM1. Cleaves the majority of cleavage sites present in the C-terminus of the polyprotein. Triggers host apoptosis through caspase-3, -8, and -9 activations. Subverts host innate immune responses through its protease activity. Targets the NF-kappa-B essential modulator NEMO and mediates its cleavage. Blocks host interferon beta induction and downstream signaling by cleaving mitochondrial MAVS, dislodging it from the mitochondria. Impairs host defense by cleaving host mRNA-decapping enzyme DCP1A to attenuate its antiviral activity. Functionally, plays a role in the initial induction of autophagosomes from host endoplasmic reticulum. Its function is as follows. Plays a role in the inhibition of host STAT3 signaling pathway by inducing the degradation of STAT3. In terms of biological role, responsible for replication and transcription of the viral RNA genome. Displays RNA and DNA duplex-unwinding activities with 5' to 3' polarity. Functionally, plays a role in viral transcription/replication and prevents the simultaneous activation of host cell dsRNA sensors, such as MDA5/IFIH1, OAS, PKR and NLRP3 inflammasome. Acts by degrading the 5'-polyuridines generated during replication of the poly(A) region of viral genomic and subgenomic RNAs. Catalyzes a two-step reaction in which a 2'3'-cyclic phosphate (2'3'-cP) is first generated by 2'-O transesterification, which is then hydrolyzed to a 3'-phosphate (3'-P). If not degraded, poly(U) RNA would hybridize with poly(A) RNA tails and activate host dsRNA sensors. Also plays a role in the inhibition of host type I interferon production by recruiting host OTULIN to promote removal of linear ubiquitination targeting host NEMO. The sequence is that of Replicase polyprotein 1ab from Sus scrofa (Pig).